The primary structure comprises 73 residues: Protein SlyX homolog (73 aa).

It belongs to the SlyX family.

The sequence is that of Protein SlyX homolog from Haemophilus ducreyi (strain 35000HP / ATCC 700724).